The sequence spans 318 residues: NADH-ubiquinone oxidoreductase chain 1 (318 aa).

8 consecutive transmembrane segments (helical) span residues 2–22 (FMIN…FLTL), 70–90 (MFII…SPLP), 100–120 (LGVL…LWSG), 136–156 (VAQT…VLLM), 172–192 (LWLL…TLAE), 222–242 (LFFL…AILF), 253–273 (ELYT…FLWI), and 294–314 (LPLT…TASI).

The protein belongs to the complex I subunit 1 family. As to quaternary structure, core subunit of respiratory chain NADH dehydrogenase (Complex I) which is composed of 45 different subunits.

It localises to the mitochondrion inner membrane. The catalysed reaction is a ubiquinone + NADH + 5 H(+)(in) = a ubiquinol + NAD(+) + 4 H(+)(out). Core subunit of the mitochondrial membrane respiratory chain NADH dehydrogenase (Complex I) which catalyzes electron transfer from NADH through the respiratory chain, using ubiquinone as an electron acceptor. Essential for the catalytic activity and assembly of complex I. This chain is NADH-ubiquinone oxidoreductase chain 1 (MT-ND1), found in Balaenoptera physalus (Fin whale).